Reading from the N-terminus, the 149-residue chain is Transcriptional repressor NrdR (149 aa).

A zinc finger lies at 3 to 34; the sequence is CPFCSAVDTKVIDSRLVGEGTQVRRRRQCVIC. The ATP-cone domain maps to 49 to 139; it reads PRVIKSNDVR…VYRSFEDIRE (91 aa).

This sequence belongs to the NrdR family. Requires Zn(2+) as cofactor.

Functionally, negatively regulates transcription of bacterial ribonucleotide reductase nrd genes and operons by binding to NrdR-boxes. This is Transcriptional repressor NrdR from Sodalis glossinidius (strain morsitans).